Here is a 46-residue protein sequence, read N- to C-terminus: uncharacterized protein (46 aa).

This is an uncharacterized protein from Saccharomyces cerevisiae (strain ATCC 204508 / S288c) (Baker's yeast).